We begin with the raw amino-acid sequence, 377 residues long: Carbamoyl phosphate synthase small chain (377 aa).

Positions 1 to 186 are CPSase; it reads MSTPALLVLA…LGKGFVTPDE (186 aa). Residues serine 47, glycine 238, and glycine 240 each contribute to the L-glutamine site. One can recognise a Glutamine amidotransferase type-1 domain in the interval 190 to 377; it reads HVVAYDFGVK…IGNMKAAKRA (188 aa). Cysteine 266 serves as the catalytic Nucleophile. Leucine 267, glutamine 270, asparagine 308, glycine 310, and phenylalanine 311 together coordinate L-glutamine. Active-site residues include histidine 350 and glutamate 352.

This sequence belongs to the CarA family. Composed of two chains; the small (or glutamine) chain promotes the hydrolysis of glutamine to ammonia, which is used by the large (or ammonia) chain to synthesize carbamoyl phosphate. Tetramer of heterodimers (alpha,beta)4.

It carries out the reaction hydrogencarbonate + L-glutamine + 2 ATP + H2O = carbamoyl phosphate + L-glutamate + 2 ADP + phosphate + 2 H(+). The enzyme catalyses L-glutamine + H2O = L-glutamate + NH4(+). It participates in amino-acid biosynthesis; L-arginine biosynthesis; carbamoyl phosphate from bicarbonate: step 1/1. It functions in the pathway pyrimidine metabolism; UMP biosynthesis via de novo pathway; (S)-dihydroorotate from bicarbonate: step 1/3. Functionally, small subunit of the glutamine-dependent carbamoyl phosphate synthetase (CPSase). CPSase catalyzes the formation of carbamoyl phosphate from the ammonia moiety of glutamine, carbonate, and phosphate donated by ATP, constituting the first step of 2 biosynthetic pathways, one leading to arginine and/or urea and the other to pyrimidine nucleotides. The small subunit (glutamine amidotransferase) binds and cleaves glutamine to supply the large subunit with the substrate ammonia. The protein is Carbamoyl phosphate synthase small chain of Neisseria meningitidis serogroup A / serotype 4A (strain DSM 15465 / Z2491).